A 492-amino-acid polypeptide reads, in one-letter code: Protein nucleotidyltransferase YdiU (492 aa).

Residues Gly-90, Gly-92, Arg-93, Lys-113, Asp-125, Gly-126, Arg-176, and Arg-183 each coordinate ATP. The Proton acceptor role is filled by Asp-252. Positions 253 and 262 each coordinate Mg(2+). Asp-262 contacts ATP.

Belongs to the SELO family. It depends on Mg(2+) as a cofactor. Mn(2+) serves as cofactor.

The catalysed reaction is L-seryl-[protein] + ATP = 3-O-(5'-adenylyl)-L-seryl-[protein] + diphosphate. It carries out the reaction L-threonyl-[protein] + ATP = 3-O-(5'-adenylyl)-L-threonyl-[protein] + diphosphate. The enzyme catalyses L-tyrosyl-[protein] + ATP = O-(5'-adenylyl)-L-tyrosyl-[protein] + diphosphate. It catalyses the reaction L-histidyl-[protein] + UTP = N(tele)-(5'-uridylyl)-L-histidyl-[protein] + diphosphate. The catalysed reaction is L-seryl-[protein] + UTP = O-(5'-uridylyl)-L-seryl-[protein] + diphosphate. It carries out the reaction L-tyrosyl-[protein] + UTP = O-(5'-uridylyl)-L-tyrosyl-[protein] + diphosphate. In terms of biological role, nucleotidyltransferase involved in the post-translational modification of proteins. It can catalyze the addition of adenosine monophosphate (AMP) or uridine monophosphate (UMP) to a protein, resulting in modifications known as AMPylation and UMPylation. The sequence is that of Protein nucleotidyltransferase YdiU from Thioalkalivibrio sulfidiphilus (strain HL-EbGR7).